The chain runs to 234 residues: Urease accessory protein UreF (234 aa).

The protein belongs to the UreF family. As to quaternary structure, ureD, UreF and UreG form a complex that acts as a GTP-hydrolysis-dependent molecular chaperone, activating the urease apoprotein by helping to assemble the nickel containing metallocenter of UreC. The UreE protein probably delivers the nickel.

It localises to the cytoplasm. Required for maturation of urease via the functional incorporation of the urease nickel metallocenter. The chain is Urease accessory protein UreF from Kocuria rhizophila (strain ATCC 9341 / DSM 348 / NBRC 103217 / DC2201).